Consider the following 358-residue polypeptide: S-adenosylmethionine:tRNA ribosyltransferase-isomerase (358 aa).

It belongs to the QueA family. In terms of assembly, monomer.

The protein resides in the cytoplasm. It carries out the reaction 7-aminomethyl-7-carbaguanosine(34) in tRNA + S-adenosyl-L-methionine = epoxyqueuosine(34) in tRNA + adenine + L-methionine + 2 H(+). It participates in tRNA modification; tRNA-queuosine biosynthesis. Functionally, transfers and isomerizes the ribose moiety from AdoMet to the 7-aminomethyl group of 7-deazaguanine (preQ1-tRNA) to give epoxyqueuosine (oQ-tRNA). In Rhodopseudomonas palustris (strain BisA53), this protein is S-adenosylmethionine:tRNA ribosyltransferase-isomerase.